Here is a 336-residue protein sequence, read N- to C-terminus: Gastrula zinc finger protein XlCGF57.1 (336 aa).

11 C2H2-type zinc fingers span residues 6–28, 34–56, 62–84, 90–112, 118–140, 146–168, 174–196, 202–224, 230–252, 258–280, and 286–308; these read YTCTECGKGFIKKSRLVTHMKIH, FICTECGKGFSQKGILQTHMKTH, FTCTECGKNFAQITTLLRHLTIH, FSCTECGKHFAHKGHLVSHMKTH, FTCTECGKHFAQKGHLVSHMKTH, FTCTECGKNFAQKTNLLCHLKIH, FTCTECGDKFAKKNNLLRHLKIH, FTCTECGKAFTLKGSLVGHMKIH, FSCTQCGKNFTQKNSLLCHLTMH, FTCTECGKGFALKGNLVLHTKIH, and FSCTQCGKNFAQKNSLLRHLKIH.

It belongs to the krueppel C2H2-type zinc-finger protein family.

The protein resides in the nucleus. May be involved in transcriptional regulation. In Xenopus laevis (African clawed frog), this protein is Gastrula zinc finger protein XlCGF57.1.